We begin with the raw amino-acid sequence, 240 residues long: 2-C-methyl-D-erythritol 4-phosphate cytidylyltransferase (240 aa).

This sequence belongs to the IspD/TarI cytidylyltransferase family. IspD subfamily.

It carries out the reaction 2-C-methyl-D-erythritol 4-phosphate + CTP + H(+) = 4-CDP-2-C-methyl-D-erythritol + diphosphate. It functions in the pathway isoprenoid biosynthesis; isopentenyl diphosphate biosynthesis via DXP pathway; isopentenyl diphosphate from 1-deoxy-D-xylulose 5-phosphate: step 2/6. Its function is as follows. Catalyzes the formation of 4-diphosphocytidyl-2-C-methyl-D-erythritol from CTP and 2-C-methyl-D-erythritol 4-phosphate (MEP). The protein is 2-C-methyl-D-erythritol 4-phosphate cytidylyltransferase of Chlorobium luteolum (strain DSM 273 / BCRC 81028 / 2530) (Pelodictyon luteolum).